Here is a 458-residue protein sequence, read N- to C-terminus: Riboflavin transporter 2 (458 aa).

5 helical membrane-spanning segments follow: residues 11–31 (LFGM…PLIV), 38–58 (WYLP…PLFV), 73–93 (PVIY…AFFW), 97–117 (VPLA…LLSV), and 146–166 (GVSG…VVHC). N-linked (GlcNAc...) asparagine glycans are attached at residues asparagine 168, asparagine 176, asparagine 182, and asparagine 199. A helical membrane pass occupies residues 204–224 (VFFLFLSAMMVVCLAAFLLLN). Residues 249–274 (DQALSLSHRPQEEKPMISSPDSHRRA) are disordered. The next 5 membrane-spanning stretches (helical) occupy residues 279–299 (FGTG…LAWV), 325–345 (LAAT…MFLP), 349–369 (LVLI…IMAM), 388–408 (IVIA…IIGV), and 417–437 (ALVW…LSMF).

It belongs to the riboflavin transporter family.

It is found in the cell membrane. It carries out the reaction riboflavin(in) = riboflavin(out). In terms of biological role, plasma membrane transporter mediating the uptake by cells of the water soluble vitamin B2/riboflavin that plays a key role in biochemical oxidation-reduction reactions of the carbohydrate, lipid, and amino acid metabolism. The protein is Riboflavin transporter 2 (rft2) of Salmo salar (Atlantic salmon).